We begin with the raw amino-acid sequence, 404 residues long: Phospho-N-acetylmuramoyl-pentapeptide-transferase (404 aa).

A run of 10 helical transmembrane segments spans residues 30–50, 73–93, 100–120, 132–152, 209–229, 242–262, 274–294, 301–321, 326–346, and 381–401; these read SAAILSLCISIFLGKRLIIFF, IPTMGGIIIIAATVVPTLLFA, IMLLLISIIWMGLIGFIDDYI, GKFKIVGQVALGVIVGITLIF, YMWIVYVLFMIFIIAAVSNGA, TSAIIGTTLAILAYVSGNVIF, LAELAIFCTAFVGACVGFLWY, IFMGDTGSLAIGSVIAVLAIV, LMIPLLCGIFFIETLSVIIQV, and KIVTRFWIVGIVLAILSLVTL.

The protein belongs to the glycosyltransferase 4 family. MraY subfamily. It depends on Mg(2+) as a cofactor.

The protein resides in the cell inner membrane. It catalyses the reaction UDP-N-acetyl-alpha-D-muramoyl-L-alanyl-gamma-D-glutamyl-meso-2,6-diaminopimeloyl-D-alanyl-D-alanine + di-trans,octa-cis-undecaprenyl phosphate = di-trans,octa-cis-undecaprenyl diphospho-N-acetyl-alpha-D-muramoyl-L-alanyl-D-glutamyl-meso-2,6-diaminopimeloyl-D-alanyl-D-alanine + UMP. Its pathway is cell wall biogenesis; peptidoglycan biosynthesis. Functionally, catalyzes the initial step of the lipid cycle reactions in the biosynthesis of the cell wall peptidoglycan: transfers peptidoglycan precursor phospho-MurNAc-pentapeptide from UDP-MurNAc-pentapeptide onto the lipid carrier undecaprenyl phosphate, yielding undecaprenyl-pyrophosphoryl-MurNAc-pentapeptide, known as lipid I. The sequence is that of Phospho-N-acetylmuramoyl-pentapeptide-transferase from Amoebophilus asiaticus (strain 5a2).